Here is a 421-residue protein sequence, read N- to C-terminus: Glutamyl-tRNA reductase (421 aa).

Substrate contacts are provided by residues 49–52 (TCNR), S109, 114–116 (EPQ), and Q120. C50 functions as the Nucleophile in the catalytic mechanism. 189–194 (GLGQIG) serves as a coordination point for NADP(+).

This sequence belongs to the glutamyl-tRNA reductase family. As to quaternary structure, homodimer.

It catalyses the reaction (S)-4-amino-5-oxopentanoate + tRNA(Glu) + NADP(+) = L-glutamyl-tRNA(Glu) + NADPH + H(+). It participates in porphyrin-containing compound metabolism; protoporphyrin-IX biosynthesis; 5-aminolevulinate from L-glutamyl-tRNA(Glu): step 1/2. Its function is as follows. Catalyzes the NADPH-dependent reduction of glutamyl-tRNA(Glu) to glutamate 1-semialdehyde (GSA). This Limosilactobacillus reuteri (strain DSM 20016) (Lactobacillus reuteri) protein is Glutamyl-tRNA reductase.